The following is a 695-amino-acid chain: MAPWPELENAHPNPNKFIEGASGPQSSIPDKDKGTSKTNDSGTPVAKIELLPSYSALVLIEEPPEGNDPWDLPELQDNGIKWSERDSKGKILCIFQGIGKFILLLGFLYLFVCSLDVLSSAFQLVGGKMAGQFFSNNSIMSNPVAGLVIGVLVTVMVQSSSTSSSIIVSMVASSLLSVRAAIPIIMGANIGTSITNTIVALMQAGDRNEFRRAFAGATVHDFFNWLSVLVLLPLEAATHYLEKLTNLVLETFSFQNGEDAPDILKVITDPFTKLIIQLDKKVIQQIAMGDSEAQNKSLIKIWCKTISNVIEENVTVPSPDNCTSPSYCWTDGIQTWTIQNVTEKENIAKCQHIFVNFSLPDLAVGIILLTVSLLILCGCLIMIVKLLGSVLRGQVATVIKKTLNTDFPFPFAWLTGYLAILVGAGMTFIVQSSSVFTSAMTPLIGIGVISIERAYPLTLGSNIGTTTTAILAALASPGNTLRSSLQIALCHFFFNISGILLWYPIPFTRLPIRLAKGLGNISAKYRWFAVFYLIFFFLLTPLTVFGLSLAGWPVLVGVGVPIILLILLVLCLRMLQARCPRILPLKLRDWNFLPLWMHSLKPWDNIISLATSCFQRRCCCCCRVCCRVCCMVCGCKCCRCSKCCKNLEEEEKEQDVPVKASGGFDNTAMSKECQDEGKGQVEVLGMKALSNTTVF.

A disordered region spans residues 1–44 (MAPWPELENAHPNPNKFIEGASGPQSSIPDKDKGTSKTNDSGTP). Over 1–90 (MAPWPELENA…KWSERDSKGK (90 aa)) the chain is Cytoplasmic. A helical membrane pass occupies residues 91-111 (ILCIFQGIGKFILLLGFLYLF). Residues 112 to 136 (VCSLDVLSSAFQLVGGKMAGQFFSN) are Extracellular-facing. Residues 137-157 (NSIMSNPVAGLVIGVLVTVMV) traverse the membrane as a helical segment. Residues 158 to 213 (QSSSTSSSIIVSMVASSLLSVRAAIPIIMGANIGTSITNTIVALMQAGDRNEFRRA) lie on the Cytoplasmic side of the membrane. The helical transmembrane segment at 214-234 (FAGATVHDFFNWLSVLVLLPL) threads the bilayer. At 235-363 (EAATHYLEKL…FVNFSLPDLA (129 aa)) the chain is on the extracellular side. N-linked (GlcNAc...) asparagine glycosylation is found at Asn295, Asn313, Asn321, Asn340, and Asn356. An intrachain disulfide couples Cys303 to Cys350. A helical transmembrane segment spans residues 364–384 (VGIILLTVSLLILCGCLIMIV). Residues 385–408 (KLLGSVLRGQVATVIKKTLNTDFP) lie on the Cytoplasmic side of the membrane. The helical transmembrane segment at 409 to 429 (FPFAWLTGYLAILVGAGMTFI) threads the bilayer. Over 430–486 (VQSSSVFTSAMTPLIGIGVISIERAYPLTLGSNIGTTTTAILAALASPGNTLRSSLQ) the chain is Extracellular. The chain crosses the membrane as a helical span at residues 487 to 507 (IALCHFFFNISGILLWYPIPF). Residues 508–526 (TRLPIRLAKGLGNISAKYR) are Cytoplasmic-facing. The helical transmembrane segment at 527 to 547 (WFAVFYLIFFFLLTPLTVFGL) threads the bilayer. Residues 548 to 551 (SLAG) lie on the Extracellular side of the membrane. Residues 552–572 (WPVLVGVGVPIILLILLVLCL) form a helical membrane-spanning segment. Residues 573 to 695 (RMLQARCPRI…MKALSNTTVF (123 aa)) lie on the Cytoplasmic side of the membrane.

The protein belongs to the SLC34A transporter family. As to expression, highly expressed in the lung, in type II alveolar cells. Moderately expressed in kidney followed by small intestine.

The protein localises to the apical cell membrane. The catalysed reaction is 3 Na(+)(out) + phosphate(out) = 3 Na(+)(in) + phosphate(in). In terms of biological role, involved in actively transporting phosphate into cells via Na(+) cotransport. The polypeptide is Sodium-dependent phosphate transport protein 2B (Slc34a2) (Rattus norvegicus (Rat)).